We begin with the raw amino-acid sequence, 59 residues long: Ferredoxin (59 aa).

Residues 2–29 enclose the 4Fe-4S ferredoxin-type domain; sequence KVSVDKDACIGCGVCASICPDVFEMDDD. Residues cysteine 10, cysteine 13, and cysteine 16 each coordinate [4Fe-4S] cluster. Cysteine 20 and cysteine 43 are oxidised to a cystine. Position 51 (cysteine 51) interacts with [4Fe-4S] cluster.

[4Fe-4S] cluster is required as a cofactor. [3Fe-4S] cluster serves as cofactor.

Functionally, ferredoxins are iron-sulfur proteins that transfer electrons in a wide variety of metabolic reactions. This Thermococcus litoralis protein is Ferredoxin.